A 2058-amino-acid polypeptide reads, in one-letter code: Protein Daple (2058 aa).

The region spanning 11 to 131 (HFLESPLVTW…KILLLMLGCA (121 aa)) is the Calponin-homology (CH) domain. 5 coiled-coil regions span residues 195–221 (HLKR…DYLQ), 247–428 (EDKK…SMNE), 455–1016 (ELNE…LRGA), 1043–1082 (ELLK…NLNL), and 1108–1388 (ANLQ…KFYD). Disordered regions lie at residues 1406-1444 (LIKP…MRPL), 1480-1592 (HRMS…EDMI), 1617-1655 (TKNR…PGSE), 1696-1724 (LHPS…LPSA), 1831-1857 (YSAT…RGNS), 1940-1959 (LALP…ASSL), and 1988-2051 (PVRP…PQTV). The span at 1409–1418 (PKKEPSRESV) shows a compositional bias: basic and acidic residues. Positions 1419 to 1429 (KSPTDVQSKTM) are enriched in polar residues. Positions 1494–1506 (GPEHLSRSRRMES) are enriched in basic and acidic residues. Residues 1552 to 1577 (NAGSSRVPWTSSLEVSRSASNSSSPL) show a composition bias toward polar residues. 2 consecutive short sequence motifs (GBA) follow at residues 1653–1675 (GSEM…PSRR) and 1676–1697 (HSLN…ETLH). Residues 1831-1841 (YSATSSSQSPE) are compositionally biased toward polar residues. The span at 2039 to 2048 (PASPDPSADP) shows a compositional bias: low complexity. The short motif at 2055 to 2058 (YGCV) is the PDZ-binding element.

The protein belongs to the CCDC88 family. As to quaternary structure, interacts with dvl2/dsh via the PDZ-binding motif. As to expression, expressed weakly in gastrulae, with slightly stronger expression in the dorsal region. In neurulae, expressed in the neural plate with strong expression in the presumptive mesencephalic region. At the tailbud stage, expressed in somatic cells and in part of the tail. Also strongly expressed in regions of the head including eye vesicles, otic vesicles, olfactory placode and the pharyngeal cavity.

It is found in the cytoplasm. The protein resides in the cell junction. Its function is as follows. Positive regulator of Wnt signaling, acting synergistically with dvl2/dsh. Functions upstream of ctnnb1/beta-catenin in the canonical Wnt pathway, and also activates jnk in the Wnt/planar cell polarity (PCP) pathway. Acts as a non-receptor guanine nucleotide exchange factor which binds to and activates guanine nucleotide-binding protein G(i) alpha subunits. This promotes apical cell constriction and subsequent bending of the neural plate during neurulation via arhgef18. The protein is Protein Daple (ccdc88c) of Xenopus laevis (African clawed frog).